The chain runs to 276 residues: NADPH-dependent 7-cyano-7-deazaguanine reductase (276 aa).

83-85 (VES) serves as a coordination point for substrate. 85–86 (SK) lines the NADPH pocket. The active-site Thioimide intermediate is the Cys-184. Residue Asp-191 is the Proton donor of the active site. 223–224 (HE) contributes to the substrate binding site. 252-253 (RG) provides a ligand contact to NADPH.

It belongs to the GTP cyclohydrolase I family. QueF type 2 subfamily. Homodimer.

It is found in the cytoplasm. The catalysed reaction is 7-aminomethyl-7-carbaguanine + 2 NADP(+) = 7-cyano-7-deazaguanine + 2 NADPH + 3 H(+). It functions in the pathway tRNA modification; tRNA-queuosine biosynthesis. Functionally, catalyzes the NADPH-dependent reduction of 7-cyano-7-deazaguanine (preQ0) to 7-aminomethyl-7-deazaguanine (preQ1). The sequence is that of NADPH-dependent 7-cyano-7-deazaguanine reductase from Azotobacter vinelandii (strain DJ / ATCC BAA-1303).